The primary structure comprises 525 residues: GMP synthase [glutamine-hydrolyzing] (525 aa).

The 190-residue stretch at 16 to 205 (PVLVVDFGAQ…LHDFAGLGAQ (190 aa)) folds into the Glutamine amidotransferase type-1 domain. Catalysis depends on Cys93, which acts as the Nucleophile. Active-site residues include His179 and Glu181. The GMPS ATP-PPase domain occupies 206–399 (WTPANIANAL…LGLPEEIVAR (194 aa)). 233-239 (SGGVDSA) is a binding site for ATP.

In terms of assembly, homodimer.

It catalyses the reaction XMP + L-glutamine + ATP + H2O = GMP + L-glutamate + AMP + diphosphate + 2 H(+). It functions in the pathway purine metabolism; GMP biosynthesis; GMP from XMP (L-Gln route): step 1/1. Its function is as follows. Catalyzes the synthesis of GMP from XMP. In Mycobacterium bovis (strain BCG / Pasteur 1173P2), this protein is GMP synthase [glutamine-hydrolyzing].